The primary structure comprises 387 residues: Mannitol-1-phosphate 5-dehydrogenase (387 aa).

NAD(+) is bound at residue 3-14; the sequence is AVHFGAGNIGRG.

This sequence belongs to the mannitol dehydrogenase family.

It carries out the reaction D-mannitol 1-phosphate + NAD(+) = beta-D-fructose 6-phosphate + NADH + H(+). The polypeptide is Mannitol-1-phosphate 5-dehydrogenase (Pseudarthrobacter chlorophenolicus (strain ATCC 700700 / DSM 12829 / CIP 107037 / JCM 12360 / KCTC 9906 / NCIMB 13794 / A6) (Arthrobacter chlorophenolicus)).